The sequence spans 491 residues: Trigger factor (491 aa).

Residues 173-260 (GDVAVVSFSG…LDELKGRELP (88 aa)) form the PPIase FKBP-type domain. Residues 435–491 (MVDPASEDKPAKASKAKSSKAKAEKEPAAEGQAKAKPAAKTSKSKTKAAEKLITPID) form a disordered region. A compositionally biased stretch (low complexity) spans 463 to 475 (AEGQAKAKPAAKT).

This sequence belongs to the FKBP-type PPIase family. Tig subfamily.

The protein resides in the cytoplasm. It catalyses the reaction [protein]-peptidylproline (omega=180) = [protein]-peptidylproline (omega=0). Functionally, involved in protein export. Acts as a chaperone by maintaining the newly synthesized protein in an open conformation. Functions as a peptidyl-prolyl cis-trans isomerase. This chain is Trigger factor, found in Synechococcus sp. (strain RCC307).